We begin with the raw amino-acid sequence, 306 residues long: Curved DNA-binding protein (306 aa).

Residues 5–69 enclose the J domain; the sequence is DYYAIMGVKP…QRRAEYDQMW (65 aa).

It is found in the cytoplasm. The protein resides in the nucleoid. In terms of biological role, DNA-binding protein that preferentially recognizes a curved DNA sequence. It is probably a functional analog of DnaJ; displays overlapping activities with DnaJ, but functions under different conditions, probably acting as a molecular chaperone in an adaptive response to environmental stresses other than heat shock. Lacks autonomous chaperone activity; binds native substrates and targets them for recognition by DnaK. Its activity is inhibited by the binding of CbpM. The chain is Curved DNA-binding protein from Shigella boydii serotype 18 (strain CDC 3083-94 / BS512).